The sequence spans 142 residues: Hemoglobin subunit alpha (142 aa).

The 141-residue stretch at 2–142 (VLSPADKTNV…VSTVLTSKYR (141 aa)) folds into the Globin domain. Ser4 carries the phosphoserine modification. An N6-succinyllysine modification is found at Lys8. Thr9 carries the post-translational modification Phosphothreonine. Lys12 carries the N6-succinyllysine modification. The residue at position 17 (Lys17) is an N6-acetyllysine; alternate. The residue at position 17 (Lys17) is an N6-succinyllysine; alternate. Tyr25 is modified (phosphotyrosine). Ser36 is subject to Phosphoserine. Lys41 carries the N6-succinyllysine modification. Position 50 is a phosphoserine (Ser50). His59 lines the O2 pocket. His88 is a binding site for heme b. Ser103 carries the post-translational modification Phosphoserine. Phosphothreonine is present on Thr109. Phosphoserine is present on residues Ser125 and Ser132. Phosphothreonine occurs at positions 135 and 138. Residue Ser139 is modified to Phosphoserine.

The protein belongs to the globin family. As to quaternary structure, heterotetramer of two alpha chains and two beta chains. As to expression, red blood cells.

Involved in oxygen transport from the lung to the various peripheral tissues. Functionally, hemopressin acts as an antagonist peptide of the cannabinoid receptor CNR1. Hemopressin-binding efficiently blocks cannabinoid receptor CNR1 and subsequent signaling. The protein is Hemoglobin subunit alpha (HBA) of Sapajus apella (Brown-capped capuchin).